Reading from the N-terminus, the 1367-residue chain is DNA polymerase III PolC-type (1367 aa).

One can recognise an Exonuclease domain in the interval 358-513; it reads FVVLDFETTG…DDARVTAQVF (156 aa).

This sequence belongs to the DNA polymerase type-C family. PolC subfamily.

The protein localises to the cytoplasm. It catalyses the reaction DNA(n) + a 2'-deoxyribonucleoside 5'-triphosphate = DNA(n+1) + diphosphate. In terms of biological role, required for replicative DNA synthesis. This DNA polymerase also exhibits 3' to 5' exonuclease activity. In Thermotoga petrophila (strain ATCC BAA-488 / DSM 13995 / JCM 10881 / RKU-1), this protein is DNA polymerase III PolC-type.